A 156-amino-acid chain; its full sequence is Protein E6 (156 aa).

Zinc fingers lie at residues 42–78 (CHYC…CSQC) and 115–151 (CVRC…CVRC).

It belongs to the papillomaviridae E6 protein family. As to quaternary structure, forms homodimers. Interacts with ubiquitin-protein ligase UBE3A/E6-AP; this interaction stimulates UBE3A ubiquitin activity. Interacts with host BAK1.

It localises to the host cytoplasm. The protein localises to the host nucleus. Its function is as follows. Plays a major role in the induction and maintenance of cellular transformation. E6 associates with host UBE3A/E6-AP ubiquitin-protein ligase and modulates its activity. Protects host keratinocytes from apoptosis by mediating the degradation of host BAK1. May also inhibit host immune response. This Homo sapiens (Human) protein is Protein E6.